Consider the following 146-residue polypeptide: Large ribosomal subunit protein eL32 (146 aa).

The protein belongs to the eukaryotic ribosomal protein eL32 family.

This is Large ribosomal subunit protein eL32 (rpl32e) from Methanocaldococcus jannaschii (strain ATCC 43067 / DSM 2661 / JAL-1 / JCM 10045 / NBRC 100440) (Methanococcus jannaschii).